The primary structure comprises 484 residues: Maintenance of mitochondrial morphology protein 1 (484 aa).

Residues 1-22 (MSFQQSETVPVPAQSSLSFTQG) are Lumenal-facing. The helical transmembrane segment at 23–43 (FLLGQLSVVLLIGAFIKFFIF) threads the bilayer. Over 44–484 (GEAPPPPSRG…PGSLSGAAAR (441 aa)) the chain is Cytoplasmic. 3 disordered regions span residues 50–98 (PSRG…SSST), 272–319 (STPP…TGSP), and 388–484 (RTGV…AAAR). Positions 54 to 64 (LSHRASTHRRS) are enriched in basic residues. Polar residues-rich tracts occupy residues 65–78 (NSIY…ANNR) and 85–98 (SNSN…SSST). Residues 130–380 (QPESLDWFNV…EPRVQVVGLP (251 aa)) enclose the SMP-LTD domain. Pro residues predominate over residues 272-286 (STPPLHTPSPSPSPP). Polar residues predominate over residues 399-408 (TGSNAASRSA). Basic and acidic residues predominate over residues 413 to 427 (LGDHHLGDREPEGLR). 2 stretches are compositionally biased toward polar residues: residues 437–449 (QFDS…SYNV) and 466–476 (GALSEQFQMPG).

The protein belongs to the MMM1 family. As to quaternary structure, homodimer. Component of the ER-mitochondria encounter structure (ERMES) or MDM complex, composed of mmm1, mdm10, mdm12 and mdm34. A mmm1 homodimer associates with one molecule of mdm12 on each side in a pairwise head-to-tail manner, and the SMP-LTD domains of mmm1 and mdm12 generate a continuous hydrophobic tunnel for phospholipid trafficking.

The protein localises to the endoplasmic reticulum membrane. Functionally, component of the ERMES/MDM complex, which serves as a molecular tether to connect the endoplasmic reticulum (ER) and mitochondria. Components of this complex are involved in the control of mitochondrial shape and protein biogenesis, and function in nonvesicular lipid trafficking between the ER and mitochondria. The mdm12-mmm1 subcomplex functions in the major beta-barrel assembly pathway that is responsible for biogenesis of all outer membrane beta-barrel proteins, and acts in a late step after the SAM complex. The mdm10-mdm12-mmm1 subcomplex further acts in the TOM40-specific pathway after the action of the mdm12-mmm1 complex. Essential for establishing and maintaining the structure of mitochondria and maintenance of mtDNA nucleoids. The protein is Maintenance of mitochondrial morphology protein 1 of Aspergillus niger (strain ATCC MYA-4892 / CBS 513.88 / FGSC A1513).